We begin with the raw amino-acid sequence, 427 residues long: Serine--tRNA ligase (427 aa).

230–232 (TSE) serves as a coordination point for L-serine. 261 to 263 (RSE) contributes to the ATP binding site. Glu-284 is a binding site for L-serine. 348 to 351 (EISS) contributes to the ATP binding site. Ser-384 lines the L-serine pocket.

The protein belongs to the class-II aminoacyl-tRNA synthetase family. Type-1 seryl-tRNA synthetase subfamily. Homodimer. The tRNA molecule binds across the dimer.

The protein resides in the cytoplasm. The catalysed reaction is tRNA(Ser) + L-serine + ATP = L-seryl-tRNA(Ser) + AMP + diphosphate + H(+). It catalyses the reaction tRNA(Sec) + L-serine + ATP = L-seryl-tRNA(Sec) + AMP + diphosphate + H(+). Its pathway is aminoacyl-tRNA biosynthesis; selenocysteinyl-tRNA(Sec) biosynthesis; L-seryl-tRNA(Sec) from L-serine and tRNA(Sec): step 1/1. In terms of biological role, catalyzes the attachment of serine to tRNA(Ser). Is also able to aminoacylate tRNA(Sec) with serine, to form the misacylated tRNA L-seryl-tRNA(Sec), which will be further converted into selenocysteinyl-tRNA(Sec). The chain is Serine--tRNA ligase from Desulforapulum autotrophicum (strain ATCC 43914 / DSM 3382 / VKM B-1955 / HRM2) (Desulfobacterium autotrophicum).